The primary structure comprises 190 residues: MTANITKSPRPLKITIVGDGMVGKTCMLITYTRNEFPEEYIPTVFDNHACNIAVDDRDYNLTLWDTAGQEDYERLRPLSYPSTNCFLLCYSISSRTSFENVKSKWWPEIRHFSAHVPVVLVGTKLDLRIPNSEKFVTTQEGKKMRKEIHAFNLVECSAKKKQNLQQVFEEAVRAVERKPKTTSKQSCKIL.

18-25 (GDGMVGKT) contributes to the GTP binding site. The Effector region signature appears at 40–48 (YIPTVFDNH). GTP is bound by residues 65 to 69 (DTAGQ) and 123 to 126 (TKLD). Cys187 carries the cysteine methyl ester modification. Cys187 carries the S-geranylgeranyl cysteine lipid modification. Positions 188-190 (KIL) are cleaved as a propeptide — removed in mature form.

Belongs to the small GTPase superfamily. Rho family. In terms of tissue distribution, highly expressed in the embryonic cephalic mesoderm starting from stage 6 and fading by stage 11. Hemocyte precursor cells.

Its subcellular location is the cell membrane. Essential for the maturation of hemocytes. The chain is Ras-like GTP-binding protein RhoL (RhoL) from Drosophila melanogaster (Fruit fly).